A 580-amino-acid polypeptide reads, in one-letter code: Putative multidrug export ATP-binding/permease protein YgaD (580 aa).

Residues 1-17 (MGVMKRYMQFVKPYKKQ) are Cytoplasmic-facing. A helical membrane pass occupies residues 18–38 (IFVTVLIGIVKFSIPLALPLL). In terms of domain architecture, ABC transmembrane type-1 spans 19–307 (FVTVLIGIVK…LINSSTTLTQ (289 aa)). At 39 to 57 (LKYVVDDIIQGGGTASDKT) the chain is on the extracellular side. A helical transmembrane segment spans residues 58–78 (TSLFTIMAIMFALFLILRPPV). The Cytoplasmic segment spans residues 79–135 (EYYRQYFAQWTASKVLYDIRAKLFDHIQKLSLRFYANTRTGEVISRVINDVEQTKDF). A helical membrane pass occupies residues 136 to 156 (VITGLMNIWLDMLTILIVISI). The Extracellular portion of the chain corresponds to 157 to 163 (MLTLDVK). The helical transmembrane segment at 164 to 184 (LTLISIVLFPLYGISVKYFYG) threads the bilayer. The Cytoplasmic segment spans residues 185–243 (RLRKLTRERSQALAQVQGHLHERIQGMPVIRSFAIEDHEQAQFNEKNGHFLDKAIRHTN). A helical membrane pass occupies residues 244–263 (WNAKTFAVVNTITDLAPLIV). The Extracellular segment spans residues 264–268 (IACAG). A helical transmembrane segment spans residues 269–288 (YFVINGPLTVGTMVAFVGYI). Residues 289-580 (DRMYNPVRRL…KHLFTIQNLN (292 aa)) are Cytoplasmic-facing. The ABC transporter domain maps to 341-576 (VEFQNVSFQY…ESQYKHLFTI (236 aa)). 375-382 (GMSGGGKS) contributes to the ATP binding site.

Belongs to the ABC transporter superfamily. As to quaternary structure, homodimer.

Its subcellular location is the cell membrane. May be involved in multidrug export. Transmembrane domains (TMD) form a pore in the cell membrane and the ATP-binding domain (NBD) is responsible for energy generation. In Bacillus subtilis (strain 168), this protein is Putative multidrug export ATP-binding/permease protein YgaD (ygaD).